Consider the following 964-residue polypeptide: Phosphoenolpyruvate carboxylase (964 aa).

Ser-11 is modified (phosphoserine). Residues His-172 and Lys-600 contribute to the active site.

This sequence belongs to the PEPCase type 1 family. As to quaternary structure, homotetramer. The cofactor is Mg(2+).

The protein resides in the cytoplasm. The enzyme catalyses oxaloacetate + phosphate = phosphoenolpyruvate + hydrogencarbonate. It participates in photosynthesis; C4 acid pathway. By light-reversible phosphorylation. Through the carboxylation of phosphoenolpyruvate (PEP) it forms oxaloacetate, a four-carbon dicarboxylic acid source for the tricarboxylic acid cycle. This chain is Phosphoenolpyruvate carboxylase, found in Amaranthus hypochondriacus (Prince-of-Wales feather).